Here is a 198-residue protein sequence, read N- to C-terminus: Probable nicotinate-nucleotide adenylyltransferase (198 aa).

Belongs to the NadD family.

It catalyses the reaction nicotinate beta-D-ribonucleotide + ATP + H(+) = deamido-NAD(+) + diphosphate. Its pathway is cofactor biosynthesis; NAD(+) biosynthesis; deamido-NAD(+) from nicotinate D-ribonucleotide: step 1/1. Functionally, catalyzes the reversible adenylation of nicotinate mononucleotide (NaMN) to nicotinic acid adenine dinucleotide (NaAD). The polypeptide is Probable nicotinate-nucleotide adenylyltransferase (Herpetosiphon aurantiacus (strain ATCC 23779 / DSM 785 / 114-95)).